The following is a 378-amino-acid chain: Biotin synthase, mitochondrial (378 aa).

Residues 1-26 (MMLVRSVFRSQLRPSVSGGLQSASCY) constitute a mitochondrion transit peptide. In terms of domain architecture, Radical SAM core spans 79-308 (REVQQCTLLS…KAMVRLSAGR (230 aa)). [4Fe-4S] cluster-binding residues include Cys94, Cys98, and Cys101. [2Fe-2S] cluster is bound by residues Cys138, Cys171, Cys231, and Arg303. A disordered region spans residues 357–378 (PPSFSEDDSESENCEKVASASH).

The protein belongs to the radical SAM superfamily. Biotin synthase family. Requires [4Fe-4S] cluster as cofactor. It depends on [2Fe-2S] cluster as a cofactor.

It localises to the mitochondrion. It catalyses the reaction (4R,5S)-dethiobiotin + (sulfur carrier)-SH + 2 reduced [2Fe-2S]-[ferredoxin] + 2 S-adenosyl-L-methionine = (sulfur carrier)-H + biotin + 2 5'-deoxyadenosine + 2 L-methionine + 2 oxidized [2Fe-2S]-[ferredoxin]. The protein operates within cofactor biosynthesis; biotin biosynthesis; biotin from 7,8-diaminononanoate: step 2/2. The sequence is that of Biotin synthase, mitochondrial (BIO2) from Arabidopsis thaliana (Mouse-ear cress).